Here is a 306-residue protein sequence, read N- to C-terminus: Aspartate carbamoyltransferase catalytic subunit (306 aa).

Residues arginine 49 and threonine 50 each coordinate carbamoyl phosphate. Lysine 77 lines the L-aspartate pocket. Carbamoyl phosphate contacts are provided by arginine 99, histidine 127, and glutamine 130. Positions 160 and 211 each coordinate L-aspartate. The carbamoyl phosphate site is built by alanine 250 and proline 251.

The protein belongs to the aspartate/ornithine carbamoyltransferase superfamily. ATCase family. As to quaternary structure, heterododecamer (2C3:3R2) of six catalytic PyrB chains organized as two trimers (C3), and six regulatory PyrI chains organized as three dimers (R2).

The enzyme catalyses carbamoyl phosphate + L-aspartate = N-carbamoyl-L-aspartate + phosphate + H(+). It functions in the pathway pyrimidine metabolism; UMP biosynthesis via de novo pathway; (S)-dihydroorotate from bicarbonate: step 2/3. Functionally, catalyzes the condensation of carbamoyl phosphate and aspartate to form carbamoyl aspartate and inorganic phosphate, the committed step in the de novo pyrimidine nucleotide biosynthesis pathway. This Bacillus licheniformis (strain ATCC 14580 / DSM 13 / JCM 2505 / CCUG 7422 / NBRC 12200 / NCIMB 9375 / NCTC 10341 / NRRL NRS-1264 / Gibson 46) protein is Aspartate carbamoyltransferase catalytic subunit.